Reading from the N-terminus, the 1026-residue chain is Multidrug resistance protein MdtC (1026 aa).

Transmembrane regions (helical) follow at residues 15–35 (ILIAAAITLCGILGFRLLPVA), 333–353 (EVEETLAISVALVIMVVFLFL), 360–380 (LIPAVAVPVSLIGTFAAMYLC), 387–407 (LSLMALTIATGFVVDDAIVVL), 431–451 (VGFTVISMSLSLVAVFLPLLL), 463–483 (FAVTLSVAIGISLVVSLTLTP), 528–548 (LVGVVFLGTVALNIWLYIAIP), 853–873 (LILIVAAIATVYIVLGILYES), 897–917 (LFNAPFSLIALIGIMLLIGIV), 953–973 (PIMMTTLAALFGALPLVLSGG), and 984–1004 (ITIVGGLVMSQLLTLYTTPVV).

Belongs to the resistance-nodulation-cell division (RND) (TC 2.A.6) family. MdtC subfamily. In terms of assembly, part of a tripartite efflux system composed of MdtA, MdtB and MdtC. MdtC forms a heteromultimer with MdtB.

The protein resides in the cell inner membrane. The sequence is that of Multidrug resistance protein MdtC from Salmonella paratyphi C (strain RKS4594).